We begin with the raw amino-acid sequence, 550 residues long: Probable acyl-activating enzyme 9 (550 aa).

Belongs to the ATP-dependent AMP-binding enzyme family. In terms of tissue distribution, expressed in leaves, flowers and developing seeds.

Its function is as follows. May act as an acid--thiol ligase that activates carboxylic acids by forming acyl-CoAs. The protein is Probable acyl-activating enzyme 9 (AEE9) of Arabidopsis thaliana (Mouse-ear cress).